A 142-amino-acid chain; its full sequence is Hemoglobin subunit alpha-1 (142 aa).

Serine 1 carries the post-translational modification N-acetylserine. Residues 1 to 142 enclose the Globin domain; it reads SLSDKDKAAV…VALALAERYR (142 aa). Histidine 59 provides a ligand contact to O2. Histidine 88 serves as a coordination point for heme b.

The protein belongs to the globin family. In terms of assembly, hb1 is a heterotetramer of two alpha-1 chains and two beta chains. HbC is a heterotetramer of two alpha-1 chains and two beta-C chains. In terms of tissue distribution, red blood cells.

Its function is as follows. Involved in oxygen transport from gills to the various peripheral tissues. The chain is Hemoglobin subunit alpha-1 (hba1) from Trematomus newnesi (Dusky notothen).